Reading from the N-terminus, the 471-residue chain is MYELQQHRRFSALDEMLPAFYYCYLLCFPVSSDNRAGTSELLQTSLSSLAEERPYLTGTVRRDMESSVRKGHLILDIPNPFEDLRIVFNDLRGPKSQWKETYQDLKDTGMPPHKLDANLLAPLTAGIGETRKVMSVQANFIHGGLLIAFCFHHNFVDAYGAGRIIARFSEHCNGTVDLKNSADPEGDGTGSRGIADLLDVELLKKQYKFEDLESDPNLWRLNCLEFRGVNDFRWPDFIPALLPVRKPPVISSMFSFSSDALAEIKAMAQPSQSGAWVSTNDALVAFLWRHTMRARFPSSITESEPPNRKSNVVVALDGRKDLSISPTYIGNCLFHCFTDLPINMVGSESTHLGDIAIRVRQTITAARNETLLKAVVGLAATHPDCQAIKYANDNLGPDLYVTSWIDLPFYKLEWGPLGKAEFFRIPDRQFESLCCILPPKDGVVQLITSMEEDHSKRLRSDAEFTRFATHR.

This sequence belongs to the fumigaclavine B O-acetyltransferase family. In terms of assembly, monomer.

Its pathway is sesquiterpene biosynthesis. Its function is as follows. O-acetyltransferase; part of the gene cluster that mediates the biosynthesis of PR-toxin, a bicyclic sesquiterpene belonging to the eremophilane class and acting as a mycotoxin. The first step of the pathway is catalyzed by the aristolochene synthase which performs the cyclization of trans,trans-farnesyl diphosphate (FPP) to the bicyclic sesquiterpene aristolochene. Following the formation of aristolochene, the non-oxygenated aristolochene is converted to the trioxygenated intermediate eremofortin B, via 7-epi-neopetasone. This conversion appears to involve three enzymes, a hydroxysterol oxidase-like enzyme, the quinone-oxidase prx3 that forms the quinone-type-structure in the bicyclic nucleus of aristolochene with the C8-oxo group and the C-3 hydroxyl group, and the P450 monooxygenase prx9 that introduces the epoxide at the double bond between carbons 1 and 2. No monoxy or dioxy-intermediates have been reported to be released to the broth, so these three early oxidative reactions may be coupled together. Eremofortin B is further oxidized by another P450 monooxygenase, that introduces a second epoxide between carbons 7 and 11 prior to acetylation to eremofortin A by the acetyltransferase prx11. The second epoxidation may be performed by a second P450 monooxygenase. After the acetylation step, eremofortin A is converted to eremofortin C and then to PR-toxin. First the conversion of eremofortin A to eremofortin C proceeds by oxidation of the side chain of the molecule at C-12 and is catalyzed by the short-chain oxidoreductase prx1. The cytochrome P450 monooxygenase prx8 also plays a role in this step. The primary alcohol formed at C-12 is finally oxidized by the short-chain alcohol dehydrogenase prx4 that forms PR-toxin. This Penicillium rubens (strain ATCC 28089 / DSM 1075 / NRRL 1951 / Wisconsin 54-1255) (Penicillium chrysogenum) protein is Eremophilane O-acetyltransferase prx11.